Consider the following 349-residue polypeptide: tRNA-specific 2-thiouridylase MnmA (349 aa).

Residues 7-14 (GLSGGVDS) and L33 each bind ATP. Residue C94 is the Nucleophile of the active site. A disulfide bridge links C94 with C193. An ATP-binding site is contributed by G119. An interaction with tRNA region spans residues 143-145 (KDQ). C193 serves as the catalytic Cysteine persulfide intermediate. The interaction with tRNA stretch occupies residues 298–299 (RY).

This sequence belongs to the MnmA/TRMU family.

Its subcellular location is the cytoplasm. The enzyme catalyses S-sulfanyl-L-cysteinyl-[protein] + uridine(34) in tRNA + AH2 + ATP = 2-thiouridine(34) in tRNA + L-cysteinyl-[protein] + A + AMP + diphosphate + H(+). In terms of biological role, catalyzes the 2-thiolation of uridine at the wobble position (U34) of tRNA, leading to the formation of s(2)U34. This Gloeothece citriformis (strain PCC 7424) (Cyanothece sp. (strain PCC 7424)) protein is tRNA-specific 2-thiouridylase MnmA.